The chain runs to 115 residues: MYDEHYTRLNQYRSLWILVFFDLPTETRKERKIASEFRKKLLDDGFSMFQFSIYIRFCASRENAEVHTKRIRNSLPEHGKIGVMQITDKQFGMMELFYGKKPVETDKPSQQLELF.

Asp22 serves as a coordination point for Mg(2+).

This sequence belongs to the CRISPR-associated endoribonuclease Cas2 protein family. In terms of assembly, homodimer, forms a heterotetramer with a Cas1 homodimer. Requires Mg(2+) as cofactor.

Functionally, CRISPR (clustered regularly interspaced short palindromic repeat), is an adaptive immune system that provides protection against mobile genetic elements (viruses, transposable elements and conjugative plasmids). CRISPR clusters contain sequences complementary to antecedent mobile elements and target invading nucleic acids. CRISPR clusters are transcribed and processed into CRISPR RNA (crRNA). Functions as a ssRNA-specific endoribonuclease. Involved in the integration of spacer DNA into the CRISPR cassette. This chain is CRISPR-associated endoribonuclease Cas2, found in Flavobacterium psychrophilum (strain ATCC 49511 / DSM 21280 / CIP 103535 / JIP02/86).